A 391-amino-acid polypeptide reads, in one-letter code: Formate-dependent phosphoribosylglycinamide formyltransferase (391 aa).

N(1)-(5-phospho-beta-D-ribosyl)glycinamide contacts are provided by residues 18 to 19 (EL) and Glu-78. Residues Arg-110, Lys-151, 156–161 (SSGKGQ), 191–194 (EEFI), and Glu-199 each bind ATP. The ATP-grasp domain occupies 115-305 (ELVSRDLKIK…EFELHLRAFL (191 aa)). Mg(2+)-binding residues include Glu-264 and Glu-276. Residues Asp-283, Lys-353, and 360–361 (RR) contribute to the N(1)-(5-phospho-beta-D-ribosyl)glycinamide site.

The protein belongs to the PurK/PurT family. As to quaternary structure, homodimer.

It carries out the reaction N(1)-(5-phospho-beta-D-ribosyl)glycinamide + formate + ATP = N(2)-formyl-N(1)-(5-phospho-beta-D-ribosyl)glycinamide + ADP + phosphate + H(+). Its pathway is purine metabolism; IMP biosynthesis via de novo pathway; N(2)-formyl-N(1)-(5-phospho-D-ribosyl)glycinamide from N(1)-(5-phospho-D-ribosyl)glycinamide (formate route): step 1/1. Functionally, involved in the de novo purine biosynthesis. Catalyzes the transfer of formate to 5-phospho-ribosyl-glycinamide (GAR), producing 5-phospho-ribosyl-N-formylglycinamide (FGAR). Formate is provided by PurU via hydrolysis of 10-formyl-tetrahydrofolate. The chain is Formate-dependent phosphoribosylglycinamide formyltransferase from Prochlorococcus marinus (strain MIT 9312).